The chain runs to 559 residues: Formate--tetrahydrofolate ligase (559 aa).

An ATP-binding site is contributed by 68–75 (TPAGEGKS).

This sequence belongs to the formate--tetrahydrofolate ligase family.

It carries out the reaction (6S)-5,6,7,8-tetrahydrofolate + formate + ATP = (6R)-10-formyltetrahydrofolate + ADP + phosphate. It functions in the pathway one-carbon metabolism; tetrahydrofolate interconversion. This is Formate--tetrahydrofolate ligase from Bacillus licheniformis (strain ATCC 14580 / DSM 13 / JCM 2505 / CCUG 7422 / NBRC 12200 / NCIMB 9375 / NCTC 10341 / NRRL NRS-1264 / Gibson 46).